The chain runs to 290 residues: Undecaprenyl-diphosphatase 2 (290 aa).

Helical transmembrane passes span 104–124, 128–148, 174–194, 205–225, 237–257, and 268–288; these read WMVI…KDLI, LRNL…FILA, CLAL…GLFL, SFLL…PDAF, QLFV…AWLL, and FALW…FGVL.

It belongs to the UppP family.

The protein resides in the cell membrane. It catalyses the reaction di-trans,octa-cis-undecaprenyl diphosphate + H2O = di-trans,octa-cis-undecaprenyl phosphate + phosphate + H(+). Its function is as follows. Catalyzes the dephosphorylation of undecaprenyl diphosphate (UPP). Confers resistance to bacitracin. The chain is Undecaprenyl-diphosphatase 2 from Corynebacterium jeikeium (strain K411).